We begin with the raw amino-acid sequence, 329 residues long: R-linalool synthase (329 aa).

Aspartate 79 provides a ligand contact to Mg(2+). Positions 79 to 83 (DDQFD) match the DDXXD motif motif. Arginine 172 is a binding site for substrate. Residues asparagine 218 and serine 222 each contribute to the Mg(2+) site. Residues 218–226 (NELHSFEKD) carry the NXXXSXXXD motif motif. Position 225 (lysine 225) interacts with substrate. Aspartate 226 contributes to the Mg(2+) binding site. Substrate is bound at residue 308–309 (RY).

Belongs to the terpene synthase family. As to quaternary structure, homodimer. Mg(2+) serves as cofactor.

The enzyme catalyses (2E)-geranyl diphosphate + H2O = (R)-linalool + diphosphate. It catalyses the reaction (2E,6E)-farnesyl diphosphate + H2O = (6E)-nerolidol + diphosphate. In vitro, catalyzes the formation of R-linalool from geranyl diphosphate (GPP). Can also accept farnesyl diphosphate (FPP) as substrate to produce trans-nerolidol. The protein is R-linalool synthase of Streptomyces clavuligerus.